The sequence spans 1220 residues: Deubiquitinating protein VCPIP1 (1220 aa).

A compositionally biased stretch (pro residues) spans 1-19 (MSQPPPPPPLPPPPPPPEA). The interval 1–40 (MSQPPPPPPLPPPPPPPEAPQTSSSLAAAASPGGLSKRRD) is disordered. A compositionally biased stretch (low complexity) spans 20–35 (PQTSSSLAAAASPGGL). The 154-residue stretch at 207–360 (LIPVHVDGDG…RNHYIPLVGI (154 aa)) folds into the OTU domain. Aspartate 215 is an active-site residue. The Nucleophile role is filled by cysteine 218. Histidine 353 is a catalytic residue. Lysine 407 carries the N6-acetyllysine modification. Disordered regions lie at residues 724-778 (SVMQ…KIRI) and 988-1008 (EATT…LGSG). 2 positions are modified to phosphoserine: serine 746 and serine 756. Residues 754-770 (PSSAPATPTKAPYSPTT) are compositionally biased toward low complexity. Position 762 is a phosphothreonine (threonine 762). 4 positions are modified to phosphoserine: serine 767, serine 993, serine 997, and serine 1076. Disordered regions lie at residues 1113–1140 (SSIQ…QRKV) and 1185–1220 (FATR…MDHS). Residues serine 1196 and serine 1205 each carry the phosphoserine modification. Residues 1197 to 1207 (MEEPEEMDSQD) are compositionally biased toward acidic residues. Residues 1208-1220 (AETTNTTEPMDHS) are compositionally biased toward polar residues.

As to quaternary structure, binds VCP and the ternary complex containing STX5A, NSFL1C and VCP. In terms of processing, phosphorylated at Ser-1205 by ATM or ATR following induction of covalent DNA-protein cross-links (DPCs).

It is found in the nucleus. It localises to the cytoplasm. Its subcellular location is the endoplasmic reticulum. The protein resides in the golgi apparatus. The protein localises to the golgi stack. The enzyme catalyses Thiol-dependent hydrolysis of ester, thioester, amide, peptide and isopeptide bonds formed by the C-terminal Gly of ubiquitin (a 76-residue protein attached to proteins as an intracellular targeting signal).. Functionally, deubiquitinating enzyme involved in DNA repair and reassembly of the Golgi apparatus and the endoplasmic reticulum following mitosis. Necessary for VCP-mediated reassembly of Golgi stacks after mitosis. Plays a role in VCP-mediated formation of transitional endoplasmic reticulum (tER). Mediates dissociation of the ternary complex containing STX5A, NSFL1C and VCP. Also involved in DNA repair following phosphorylation by ATM or ATR: acts by catalyzing deubiquitination of SPRTN, thereby promoting SPRTN recruitment to chromatin and subsequent proteolytic cleavage of covalent DNA-protein cross-links (DPCs). Hydrolyzes 'Lys-11'- and 'Lys-48'-linked polyubiquitin chains. The sequence is that of Deubiquitinating protein VCPIP1 from Mus musculus (Mouse).